Reading from the N-terminus, the 314-residue chain is ATP synthase gamma chain (314 aa).

The protein belongs to the ATPase gamma chain family. F-type ATPases have 2 components, CF(1) - the catalytic core - and CF(0) - the membrane proton channel. CF(1) has five subunits: alpha(3), beta(3), gamma(1), delta(1), epsilon(1). CF(0) has three main subunits: a, b and c.

It localises to the cellular thylakoid membrane. Functionally, produces ATP from ADP in the presence of a proton gradient across the membrane. The gamma chain is believed to be important in regulating ATPase activity and the flow of protons through the CF(0) complex. This is ATP synthase gamma chain from Synechococcus sp. (strain JA-2-3B'a(2-13)) (Cyanobacteria bacterium Yellowstone B-Prime).